Here is a 1306-residue protein sequence, read N- to C-terminus: DNA-directed RNA polymerase subunit beta' (1306 aa).

Residues Cys-214, Cys-285, Cys-292, and Cys-295 each contribute to the Zn(2+) site. Disordered regions lie at residues 1234 to 1263 (LDNGEDSLNNRYGQGERDNNNSDKKPPNRL) and 1281 to 1306 (IARAYTEADPPWSVESKQEKDDDDDK). Positions 1247 to 1259 (QGERDNNNSDKKP) are enriched in basic and acidic residues.

Belongs to the RNA polymerase beta' chain family. RpoC2 subfamily. In cyanobacteria the RNAP catalytic core is composed of 2 alpha, 1 beta, 1 beta', 1 gamma and 1 omega subunit. When a sigma factor is associated with the core the holoenzyme is formed, which can initiate transcription. Zn(2+) is required as a cofactor.

It carries out the reaction RNA(n) + a ribonucleoside 5'-triphosphate = RNA(n+1) + diphosphate. DNA-dependent RNA polymerase catalyzes the transcription of DNA into RNA using the four ribonucleoside triphosphates as substrates. This chain is DNA-directed RNA polymerase subunit beta', found in Crocosphaera subtropica (strain ATCC 51142 / BH68) (Cyanothece sp. (strain ATCC 51142)).